The sequence spans 231 residues: Female protein (231 aa).

Positions 1 to 19 (MDKMLLLLGVSILLSEVFA) are cleaved as a signal peptide. Positions 24–223 (TGKVFVFPRE…YAVIRPRCVA (200 aa)) constitute a Pentraxin (PTX) domain. N-linked (GlcNAc...) asparagine glycosylation is present at Asn-51. A disulfide bridge links Cys-55 with Cys-114. Ca(2+) is bound by residues Asp-77, Asn-78, Glu-155, Gln-156, Asp-157, and Gln-167.

Belongs to the pentraxin family. As to quaternary structure, homopentamer. Pentraxin (or pentaxin) have a discoid arrangement of 5 non-covalently bound subunits. Ca(2+) serves as cofactor.

Its subcellular location is the secreted. This is Female protein from Nothocricetulus migratorius (Gray dwarf hamster).